A 180-amino-acid polypeptide reads, in one-letter code: UPF0227 protein Spro_1925 (180 aa).

Belongs to the UPF0227 family.

The polypeptide is UPF0227 protein Spro_1925 (Serratia proteamaculans (strain 568)).